A 503-amino-acid polypeptide reads, in one-letter code: AMP phosphorylase (503 aa).

AMP contacts are provided by residues glycine 168, 194–199 (SRAITS), and threonine 203. Aspartate 256 functions as the Proton donor in the catalytic mechanism. AMP contacts are provided by serine 264 and lysine 288.

This sequence belongs to the thymidine/pyrimidine-nucleoside phosphorylase family. Type 2 subfamily.

The enzyme catalyses AMP + phosphate = alpha-D-ribose 1,5-bisphosphate + adenine. It catalyses the reaction CMP + phosphate = cytosine + alpha-D-ribose 1,5-bisphosphate. It carries out the reaction UMP + phosphate = alpha-D-ribose 1,5-bisphosphate + uracil. Its function is as follows. Catalyzes the conversion of AMP and phosphate to adenine and ribose 1,5-bisphosphate (R15P). Exhibits phosphorylase activity toward CMP and UMP in addition to AMP. Functions in an archaeal AMP degradation pathway, together with R15P isomerase and RubisCO. The sequence is that of AMP phosphorylase from Methanocaldococcus jannaschii (strain ATCC 43067 / DSM 2661 / JAL-1 / JCM 10045 / NBRC 100440) (Methanococcus jannaschii).